Consider the following 1543-residue polypeptide: MSGTQSTITDRFPLKKPIRHGSILNRESPTDKKQKVERSSSHDFDPTDSSSKKTKSSSEESRSEIYGLVQRCVIIQKDDNGFGLTVSGDNPVFVQSVKEDGAAMRAGVQTGDRIIKVNGTLVTHSNHLEVVKLIRSGSYVALTVQGRPPGSPQIPLADSEVEPSVTGHMSPIMTSPHSPGAAGNMERITSPVLVGEENNVVHNQKVEILRKMLQKEQERLQLLQEDYNRTATQRLLKEIQEAKKHIPQLQEQLSKATGSAQDGAVIAPSRPLGDALTLSEAEADPGDGLCRTDWSSGDASRPSSDSADSPKSSLRERSYLEEAPERSEGVQDAEPQSLVGSPSTRGAPHIIGAEDDDFGTEHEQINGQCSCFQSIELLKSRPAHLAVFLHHVVSQFDPATLLCYLYSDLYKQTNSKETRRVFLEFHQFFLDRSAHLKVPVPEEISVDLEKRRPELIPEDLHRLYIQTMQERVHPEVQRHLEDFRQKRSMGLTLAESELTKLDAERDKDRGTLEKERACAEQIVTKIEEVLMTAQAVEEERSSTMQYVILMYMKYLGVKVKEPRNLEHKRGRIGFLPKIKQSMKKDREGEEKGKRRGFPSILGPPRRPSRHDNSAIGRAMEIQKSRHPKHLSTPSSVSPEPQDPAKLRQSGVANEGTDTGYLPASSMSSATSGTALSQEGGRENDTGTKQVGEASAPGDCLDSTPRVPTTVFDFPPPLLDQVQEEECEVERVAEHGTPKPFRKFDSIAFGESQSEDEQFENDLETDPPNWQQLVSREVLLGLKPSEIKRQEVINELFYTERAHVRTLKVLDQVFYQRVSREGILSPSELRKIFSNLEDILQLHVGLNEQMKAVRKRNETSVIDHIGEDLLIWFSGPGEEKLKHAAATFCSNQPFALEMIKSRQKKDSRFHTFVQDAESNPLCRRLQLKDIIPTQMQRLTKYPLLLDNIAKYTEWPPEREKVKKAADHCRQILNYVNQAVREAENKQRLEDYQRRLDTSNLKLSEYPNVDELRNLDLTKRKMIHEGPLVWKVNRDKSIDLYTLLLEDILVLLQKQDDRLVLRCHSKILASTADSKHTFSPVIKLSTVLVRQVATDNKALFVISMSDNGAQIYELVAQTVSEKTVWQDLICRMAASVKEQSTKPIPLPQPPPCEGDNDEEEPAKLKVEHHDLSVAGLQSPDRVLGLESPLISSKPQSHSLNTPGKSAAEHLFVTATQFAKEQHANGALKEGDGGYPVTIPGPHLPVSEERWALDALRNLGLLKQLLVQQLGLTEKSTQEDWQSFSRYGPASEEVQADSGIRDLENVKACHAREGQMSFKTGTGDIATCDSPRTSTESCAAQDSVILASQDSQASNVLVMDHMILTPEMPPAEPEGGLDESGEHFFDAREAHSDDNPSEGDGAVKKEEKDVNLRISGNCLILDGYDAVQESSTDEEVASSFPLQPVTGIPAVDSSHQQQHSPQNVHPEGPVSPFTPEFLVQRHWRAMEDTCFEIQSPSCTDSQSQILEYIHKIEADLEHLKKVEESYALLCQRLAGSALPDKLSDKS.

The segment at Met-1–Arg-62 is disordered. Residue Ser-2 is modified to N-acetylserine. The span at Ser-28–Asp-45 shows a compositional bias: basic and acidic residues. Ser-41 is subject to Phosphoserine. One can recognise a PDZ domain in the interval Cys-72–Ser-151. Residues Val-194 to Asp-262 adopt a coiled-coil conformation. Residues Ala-281–Asp-355 form a disordered region. The segment covering Asp-293 to Ser-312 has biased composition (low complexity). Ser-309 is subject to Phosphoserine. The segment covering Ser-313–Gly-329 has biased composition (basic and acidic residues). A Phosphoserine modification is found at Ser-341. One can recognise an RGSL domain in the interval Gly-367–Lys-558. Residues Phe-574–Val-710 form a disordered region. The segment covering Met-582–Gly-592 has biased composition (basic and acidic residues). Ser-637 is modified (phosphoserine). Positions Ala-663 to Ser-676 are enriched in low complexity. A Phosphothreonine modification is found at Thr-736. Residues Lys-787 to Ala-977 enclose the DH domain. Residues Ala-981–Tyr-1004 adopt a coiled-coil conformation. Positions Lys-1019–Ala-1132 constitute a PH domain. The segment at Gln-1137–Glu-1158 is disordered. Residues Ser-1288, Ser-1327, and Ser-1377 each carry the phosphoserine modification. 2 disordered regions span residues Glu-1386 to Lys-1405 and Pro-1441 to Ser-1468. A compositionally biased stretch (polar residues) spans Ser-1450–Asn-1460. Ser-1457 and Ser-1540 each carry phosphoserine.

Interacts with GNA12 and GNA13, probably through the RGS-like domain, with RHOA, PLXNB1 and PLXNB2, and through its PDZ domain with IGF1R beta subunit. Interacts with GCSAM. Found in a complex with ARHGEF11 and ARHGEF12; binding to ARHGEF11 and ARHGEF12 enhances CDC42 GEF activity of PLEKHG4B, and PLEKHG4B, in turn, inhibits ARHGEF11- and ARHGEF12-mediated RHOA activation. Expressed in brain, predominantly in neuronal cell bodies.

The protein localises to the cytoplasm. It localises to the membrane. Its function is as follows. May play a role in the regulation of RhoA GTPase by guanine nucleotide-binding alpha-12 (GNA12) and alpha-13 (GNA13). Acts as guanine nucleotide exchange factor (GEF) for RhoA GTPase and may act as GTPase-activating protein (GAP) for GNA12 and GNA13. This chain is Rho guanine nucleotide exchange factor 12 (Arhgef12), found in Mus musculus (Mouse).